A 243-amino-acid polypeptide reads, in one-letter code: MLILLPAVDVVDGRAVRLVQGKAGSETEYGSALDAALGWQRDGAEWIHLVDLDAAFGRGSNRELLAEVVGKLDVRVELSGGIRDDDSLAAALATGCARVNLGTAALENPQWCARAIGEHGDKVAVGLDVQIIDGQHRLRGRGWETDGGDLWEVLERLERQGCSRYVVTDVTKDGTLGGPNLDLLGAVADRTDAPVIASGGVSSLDDLRAIATLTGRGVEGAIVGKALYAGRFTLPQALAAVAE.

D9 (proton acceptor) is an active-site residue. Residue D128 is the Proton donor of the active site.

The protein belongs to the HisA/HisF family.

The protein resides in the cytoplasm. The catalysed reaction is 1-(5-phospho-beta-D-ribosyl)-5-[(5-phospho-beta-D-ribosylamino)methylideneamino]imidazole-4-carboxamide = 5-[(5-phospho-1-deoxy-D-ribulos-1-ylimino)methylamino]-1-(5-phospho-beta-D-ribosyl)imidazole-4-carboxamide. It catalyses the reaction N-(5-phospho-beta-D-ribosyl)anthranilate = 1-(2-carboxyphenylamino)-1-deoxy-D-ribulose 5-phosphate. The protein operates within amino-acid biosynthesis; L-histidine biosynthesis; L-histidine from 5-phospho-alpha-D-ribose 1-diphosphate: step 4/9. Its pathway is amino-acid biosynthesis; L-tryptophan biosynthesis; L-tryptophan from chorismate: step 3/5. Its function is as follows. Involved in both the histidine and tryptophan biosynthetic pathways. This is Phosphoribosyl isomerase A from Mycolicibacterium paratuberculosis (strain ATCC BAA-968 / K-10) (Mycobacterium paratuberculosis).